A 309-amino-acid polypeptide reads, in one-letter code: 5-formyl-3-hydroxy-2-methylpyridine 4-carboxylate 5-dehydrogenase (309 aa).

Residues 12–13 (TM), Asp32, 87–89 (VPE), and Lys94 each bind NAD(+).

This sequence belongs to the 3-hydroxyacyl-CoA dehydrogenase family. Homodimer.

The enzyme catalyses 5-formyl-3-hydroxy-2-methylpyridine-4-carboxylate + NAD(+) + H2O = 5-hydroxy-6-methylpyridine-3,4-dicarboxylate + NADH + 2 H(+). The catalysed reaction is 5-formyl-3-hydroxy-2-methylpyridine-4-carboxylate + NADH + H(+) = 4-pyridoxate + NAD(+). Its pathway is cofactor degradation; B6 vitamer degradation. Involved in the degradation of pyridoxine (vitamin B(6)). Catalyzes the oxidation of 5-formyl-3-hydroxy-2-methylpyridine-4-carboxylate (FHMPC) by NAD(+) to 5-hydroxy-6-methylpyridine-3,4-dicarboxylate (HMPDC). Can also catalyze the reduction of FHMPC by NADH to 4-pyridoxic acid. The sequence is that of 5-formyl-3-hydroxy-2-methylpyridine 4-carboxylate 5-dehydrogenase from Mesorhizobium japonicum (strain LMG 29417 / CECT 9101 / MAFF 303099) (Mesorhizobium loti (strain MAFF 303099)).